Consider the following 855-residue polypeptide: MICAL-like protein 1 (855 aa).

A Calponin-homology (CH) domain is found at 2–108 (AGPRGALLAW…YVSQYYNHFT (107 aa)). Disordered regions lie at residues 110-165 (SGQA…SSAC), 226-253 (GRSGTRPLSLQKQQPAAAAEAKDGEDSD), and 269-659 (QASS…HGFP). Low complexity predominate over residues 124–135 (PAAPSPTSTSPA). An LIM zinc-binding domain is found at 163–226 (SACAACGQRV…ERCTRLGLGG (64 aa)). Positions 269 to 278 (QASSEVQPHT) are enriched in polar residues. Residues serine 293 and serine 307 each carry the phosphoserine modification. The span at 308-325 (ESSALTPPTPRPRSSLQQ) shows a compositional bias: polar residues. 2 positions are modified to phosphothreonine: threonine 313 and threonine 316. Residues 356 to 367 (LSERMTAPRKDP) show a composition bias toward basic and acidic residues. An NPF1 motif is present at residues 423 to 425 (NPF). Positions 425–434 (FEEEEEEEEA) are enriched in acidic residues. Positions 439–449 (VPSPAPAPPET) are enriched in pro residues. Threonine 461 and threonine 463 each carry phosphothreonine. A phosphoserine mark is found at serine 464, serine 465, serine 478, and serine 480. A compositionally biased stretch (low complexity) spans 499-514 (PSPALSVESLSSESSS). Residues 542–554 (PGTSANSVTPSAH) show a composition bias toward polar residues. The span at 555–570 (SSLSSSGELGQPSGEQ) shows a compositional bias: low complexity. Serine 613 carries the phosphoserine modification. The NPF2 motif lies at 625-627 (NPF). The mediates the interaction with RAB13 and intramolecular interaction with the calponin-homology (CH) domain stretch occupies residues 644-855 (KGAKPVRPPA…AKSKAPTGKS (212 aa)). Residues 663–810 (RKVQADQYIP…EEEEDKMLET (148 aa)) form the bMERB domain. The stretch at 679–703 (EMDSIERQLDALEHSGVLLEEKLRG) forms a coiled coil. Serine 682 and serine 732 each carry phosphoserine. Positions 692 to 855 (HSGVLLEEKL…AKSKAPTGKS (164 aa)) are necessary and sufficient to associate with tubular recycling endosome membranes, mediate phosphatidic acid-binding and membrane tubulation. Residues 794 to 822 (LDEDRQREEEEDKMLETMIKKKDFQREAE) are a coiled coil. The span at 815–826 (KDFQREAESDSK) shows a compositional bias: basic and acidic residues. Residues 815-855 (KDFQREAESDSKKKGKFKTMKVLKLLGNKRDAKSKAPTGKS) are disordered.

In terms of assembly, homooligomer. Interacts (via NPF1 motif) with EHD1 (via EH domain); the interaction is direct and probably recruits EHD1 to membranes. Interacts with EHD3 (via EH domain). Interacts with RAB35 (GTP-bound form); the interaction is direct and probably recruits MICALL1 to membranes. Interacts with ACAP2; the interaction is indirect through RAB35. Interacts with RAB8A (GTP-bound form); regulates RAB8A association with recycling endosomes. Interacts with RAB13 (GTP-bound form). Interacts with ARF6 (GTP-bound form). Interacts with PACSIN2 (via the SH3 domain). Interacts with DPYSL2.

It is found in the recycling endosome membrane. The protein localises to the late endosome membrane. Its subcellular location is the cell projection. It localises to the cilium membrane. The protein resides in the cytoplasm. It is found in the cytoskeleton. The protein localises to the microtubule organizing center. Its subcellular location is the centrosome. It localises to the centriole. Its function is as follows. Lipid-binding protein with higher affinity for phosphatidic acid, a lipid enriched in recycling endosome membranes. On endosome membranes, acts as a downstream effector of Rab proteins recruiting cytosolic proteins to regulate membrane tubulation. Involved in a late step of receptor-mediated endocytosis regulating for instance endocytosed-EGF receptor trafficking. Alternatively, regulates slow endocytic recycling of endocytosed proteins back to the plasma membrane. Also involved in cargo protein delivery to the plasma membrane. Plays a role in ciliogenesis coordination, recruits EHD1 to primary cilium where it is anchored to the centriole through interaction with tubulins. May indirectly play a role in neurite outgrowth. This Rattus norvegicus (Rat) protein is MICAL-like protein 1 (Micall1).